A 147-amino-acid polypeptide reads, in one-letter code: D-aminoacyl-tRNA deacylase (147 aa).

A Gly-cisPro motif, important for rejection of L-amino acids motif is present at residues 137–138 (GP).

The protein belongs to the DTD family. As to quaternary structure, homodimer.

It is found in the cytoplasm. The catalysed reaction is glycyl-tRNA(Ala) + H2O = tRNA(Ala) + glycine + H(+). The enzyme catalyses a D-aminoacyl-tRNA + H2O = a tRNA + a D-alpha-amino acid + H(+). Functionally, an aminoacyl-tRNA editing enzyme that deacylates mischarged D-aminoacyl-tRNAs. Also deacylates mischarged glycyl-tRNA(Ala), protecting cells against glycine mischarging by AlaRS. Acts via tRNA-based rather than protein-based catalysis; rejects L-amino acids rather than detecting D-amino acids in the active site. By recycling D-aminoacyl-tRNA to D-amino acids and free tRNA molecules, this enzyme counteracts the toxicity associated with the formation of D-aminoacyl-tRNA entities in vivo and helps enforce protein L-homochirality. The protein is D-aminoacyl-tRNA deacylase of Acinetobacter baumannii (strain ACICU).